The following is a 121-amino-acid chain: Small ribosomal subunit protein uS13 (121 aa).

The disordered stretch occupies residues 91 to 121 (HRKGLPLRGQRTRTNARTRKGPRKAGVALKK).

It belongs to the universal ribosomal protein uS13 family. Part of the 30S ribosomal subunit. Forms a loose heterodimer with protein S19. Forms two bridges to the 50S subunit in the 70S ribosome.

In terms of biological role, located at the top of the head of the 30S subunit, it contacts several helices of the 16S rRNA. In the 70S ribosome it contacts the 23S rRNA (bridge B1a) and protein L5 of the 50S subunit (bridge B1b), connecting the 2 subunits; these bridges are implicated in subunit movement. Contacts the tRNAs in the A and P-sites. This chain is Small ribosomal subunit protein uS13, found in Cupriavidus pinatubonensis (strain JMP 134 / LMG 1197) (Cupriavidus necator (strain JMP 134)).